We begin with the raw amino-acid sequence, 386 residues long: MLWFSLFILSIAIGGSFALLVAIARTPGLADLFPPKYFYHALVGHVDSALIVGLYAFLIFLWHRIFEKKENFASFLPALLGFFMIAGSSLFGLGQALWNNYVPTIIHPVFFGGVSLFFLGVFLNSLRFLPQAVKNFYIGDTLKSILSTTVINSFLMPLTYLIAYFNTPKGENVYEYFEALFWFGGHTHQFVNAGLLISLWLLLLRREVLNLWFLNLLLVVFPITYFFAQIFLNPLSSTGKSLTTWGYMVGIGIPTIVYGLITLVRAVKGLDFYRSILVLSVSLYLLGALMGYMIVGMDTRVPAHYHTVIASILVGVIALTFMYLQELGYMEKLGKFEKFIPFSTVLVCFFLSSDSSGRESLELQGKLRERITYKTQRFTYSWLSWD.

11 helical membrane-spanning segments follow: residues 3–23 (WFSL…LVAI), 42–62 (LVGH…IFLW), 72–92 (FASF…SLFG), 102–122 (VPTI…LGVF), 145–165 (ILST…IAYF), 183–203 (FGGH…WLLL), 212–232 (WFLN…QIFL), 244–264 (TWGY…ITLV), 276–296 (ILVL…MIVG), 308–328 (VIAS…QELG), and 333–353 (LGKF…FLSS).

The protein to R.prowazekii RP382.

The protein resides in the cell membrane. This is an uncharacterized protein from Aquifex aeolicus (strain VF5).